The chain runs to 194 residues: Metalloproteinase inhibitor 2 (194 aa).

Cys-1 is a binding site for Zn(2+). 2 involved in metalloproteinase-binding regions span residues 1 to 4 (CSCS) and 69 to 70 (SA). Cystine bridges form between Cys-1–Cys-72, Cys-3–Cys-101, Cys-13–Cys-126, Cys-128–Cys-175, Cys-133–Cys-138, and Cys-146–Cys-167. An NTR domain is found at 1–126 (CSCSPVHPQQ…SLNHRYQMGC (126 aa)).

Belongs to the protease inhibitor I35 (TIMP) family. In terms of assembly, interacts (via the C-terminal) with MMP2 (via the C-terminal PEX domain); the interaction inhibits the MMP2 activity. In terms of processing, the activity of TIMP2 is dependent on the presence of disulfide bonds.

It is found in the secreted. In terms of biological role, complexes with metalloproteinases (such as collagenases) and irreversibly inactivates them by binding to their catalytic zinc cofactor. The sequence is that of Metalloproteinase inhibitor 2 (TIMP2) from Oryctolagus cuniculus (Rabbit).